The chain runs to 342 residues: Protein FinQ (342 aa).

A DNA-binding region (H-T-H motif) is located at residues 208 to 227 (RDREFNLLNAQISMVLYICS).

Functionally, transcriptional inhibitor of the F plasmid transfer genes. FinQ may regulate a gene or genes encoded on the IncI plasmids, and coincidentally may inhibit F transfer when coresident. This is Protein FinQ (finQ) from Escherichia coli.